Here is a 486-residue protein sequence, read N- to C-terminus: Galactose-1-phosphate uridylyltransferase (486 aa).

It belongs to the galactose-1-phosphate uridylyltransferase type 2 family.

It localises to the cytoplasm. It carries out the reaction alpha-D-galactose 1-phosphate + UDP-alpha-D-glucose = alpha-D-glucose 1-phosphate + UDP-alpha-D-galactose. The protein operates within carbohydrate metabolism; galactose metabolism. This is Galactose-1-phosphate uridylyltransferase from Lacticaseibacillus casei (Lactobacillus casei).